Reading from the N-terminus, the 860-residue chain is GPI ethanolamine phosphate transferase 2 (860 aa).

Residues Asn-123 and Asn-180 are each glycosylated (N-linked (GlcNAc...) asparagine). A run of 8 helical transmembrane segments spans residues 408–428, 438–458, 459–479, 487–506, 524–544, 555–575, 576–596, and 639–659; these read LGGI…FSAL, LYLI…TVEE, EHQI…ISGS, FNWM…NQTG, NHPV…NKVW, LAFL…ITQA, WEAG…PGTL, and AFLT…LFMV. N-linked (GlcNAc...) asparagine glycosylation occurs at Asn-672. 4 helical membrane passes run 692 to 712, 736 to 756, 795 to 815, and 834 to 854; these read LVLV…FSMG, FVGV…STAG, VYVV…TCFF, and FVWT…IFVV.

It belongs to the PIGG/PIGN/PIGO family. PIGG subfamily.

Its subcellular location is the endoplasmic reticulum membrane. It functions in the pathway glycolipid biosynthesis; glycosylphosphatidylinositol-anchor biosynthesis. Ethanolamine phosphate transferase involved in glycosylphosphatidylinositol-anchor biosynthesis. Transfers ethanolamine phosphate to the GPI second mannose. The chain is GPI ethanolamine phosphate transferase 2 (LAS21) from Yarrowia lipolytica (strain CLIB 122 / E 150) (Yeast).